The primary structure comprises 241 residues: Phosphoribosylaminoimidazole-succinocarboxamide synthase (241 aa).

This sequence belongs to the SAICAR synthetase family.

The catalysed reaction is 5-amino-1-(5-phospho-D-ribosyl)imidazole-4-carboxylate + L-aspartate + ATP = (2S)-2-[5-amino-1-(5-phospho-beta-D-ribosyl)imidazole-4-carboxamido]succinate + ADP + phosphate + 2 H(+). Its pathway is purine metabolism; IMP biosynthesis via de novo pathway; 5-amino-1-(5-phospho-D-ribosyl)imidazole-4-carboxamide from 5-amino-1-(5-phospho-D-ribosyl)imidazole-4-carboxylate: step 1/2. The protein is Phosphoribosylaminoimidazole-succinocarboxamide synthase (purC) of Bacillus subtilis (strain 168).